The primary structure comprises 1410 residues: DNA-directed RNA polymerase subunit beta' (1410 aa).

Residues Cys70, Cys72, Cys85, and Cys88 each coordinate Zn(2+). Residues Asp460, Asp462, and Asp464 each contribute to the Mg(2+) site. Positions 814, 888, 895, and 898 each coordinate Zn(2+).

This sequence belongs to the RNA polymerase beta' chain family. The RNAP catalytic core consists of 2 alpha, 1 beta, 1 beta' and 1 omega subunit. When a sigma factor is associated with the core the holoenzyme is formed, which can initiate transcription. Mg(2+) is required as a cofactor. It depends on Zn(2+) as a cofactor.

It catalyses the reaction RNA(n) + a ribonucleoside 5'-triphosphate = RNA(n+1) + diphosphate. DNA-dependent RNA polymerase catalyzes the transcription of DNA into RNA using the four ribonucleoside triphosphates as substrates. This is DNA-directed RNA polymerase subunit beta' from Saccharophagus degradans (strain 2-40 / ATCC 43961 / DSM 17024).